Here is a 419-residue protein sequence, read N- to C-terminus: L-rhamnose isomerase (419 aa).

Residues histidine 262, aspartate 294, and aspartate 296 each coordinate Mn(2+).

It belongs to the rhamnose isomerase family. In terms of assembly, homotetramer. Mn(2+) is required as a cofactor.

It localises to the cytoplasm. The catalysed reaction is L-rhamnopyranose = L-rhamnulose. Its pathway is carbohydrate degradation; L-rhamnose degradation; glycerone phosphate from L-rhamnose: step 1/3. Its function is as follows. Catalyzes the interconversion of L-rhamnose and L-rhamnulose. This Escherichia coli O9:H4 (strain HS) protein is L-rhamnose isomerase.